The primary structure comprises 337 residues: Ketol-acid reductoisomerase (NADP(+)) (337 aa).

Residues 3 to 183 (VEMFYDDDAD…GGTRAGVIKT (181 aa)) form the KARI N-terminal Rossmann domain. NADP(+) is bound by residues 26-29 (YGSQ), Ser-52, Ser-54, and 84-87 (DTAQ). Residue His-109 is part of the active site. Gly-135 contacts NADP(+). The KARI C-terminal knotted domain maps to 184-329 (TFKEETETDL…AKLRGLMSWV (146 aa)). Positions 192, 196, 228, and 232 each coordinate Mg(2+). Position 253 (Ser-253) interacts with substrate.

Belongs to the ketol-acid reductoisomerase family. It depends on Mg(2+) as a cofactor.

It carries out the reaction (2R)-2,3-dihydroxy-3-methylbutanoate + NADP(+) = (2S)-2-acetolactate + NADPH + H(+). The catalysed reaction is (2R,3R)-2,3-dihydroxy-3-methylpentanoate + NADP(+) = (S)-2-ethyl-2-hydroxy-3-oxobutanoate + NADPH + H(+). The protein operates within amino-acid biosynthesis; L-isoleucine biosynthesis; L-isoleucine from 2-oxobutanoate: step 2/4. Its pathway is amino-acid biosynthesis; L-valine biosynthesis; L-valine from pyruvate: step 2/4. Functionally, involved in the biosynthesis of branched-chain amino acids (BCAA). Catalyzes an alkyl-migration followed by a ketol-acid reduction of (S)-2-acetolactate (S2AL) to yield (R)-2,3-dihydroxy-isovalerate. In the isomerase reaction, S2AL is rearranged via a Mg-dependent methyl migration to produce 3-hydroxy-3-methyl-2-ketobutyrate (HMKB). In the reductase reaction, this 2-ketoacid undergoes a metal-dependent reduction by NADPH to yield (R)-2,3-dihydroxy-isovalerate. This chain is Ketol-acid reductoisomerase (NADP(+)), found in Nocardia farcinica (strain IFM 10152).